A 237-amino-acid polypeptide reads, in one-letter code: Lysophospholipase-like protein 1 (237 aa).

An N-acetylalanine modification is found at alanine 2. Active-site charge relay system residues include serine 124, aspartate 179, and histidine 211.

Belongs to the AB hydrolase superfamily. AB hydrolase 2 family.

It is found in the cytoplasm. The protein resides in the cytosol. It carries out the reaction S-hexadecanoyl-L-cysteinyl-[protein] + H2O = L-cysteinyl-[protein] + hexadecanoate + H(+). Functionally, palmitoyl thioesterase that catalyzes depalmitoylation of CGAS and KCNMA1. Acts as a regulator of innate immunity by mediating depalmitoylation of CGAS, thereby preventing CGAS homodimerization and cyclic GMP-AMP synthase activity. Does not exhibit phospholipase nor triacylglycerol lipase activity, able to hydrolyze only short chain substrates due to its shallow active site. The polypeptide is Lysophospholipase-like protein 1 (Pongo abelii (Sumatran orangutan)).